We begin with the raw amino-acid sequence, 183 residues long: Large ribosomal subunit protein uL6 (183 aa).

Belongs to the universal ribosomal protein uL6 family. As to quaternary structure, part of the 50S ribosomal subunit.

Its function is as follows. This protein binds to the 23S rRNA, and is important in its secondary structure. It is located near the subunit interface in the base of the L7/L12 stalk, and near the tRNA binding site of the peptidyltransferase center. The polypeptide is Large ribosomal subunit protein uL6 (Chlamydia felis (strain Fe/C-56) (Chlamydophila felis)).